A 112-amino-acid polypeptide reads, in one-letter code: Small ribosomal subunit protein bS6 (112 aa).

It belongs to the bacterial ribosomal protein bS6 family.

Binds together with bS18 to 16S ribosomal RNA. This is Small ribosomal subunit protein bS6 from Christiangramia forsetii (strain DSM 17595 / CGMCC 1.15422 / KT0803) (Gramella forsetii).